The sequence spans 231 residues: Biosynthetic peptidoglycan transglycosylase (231 aa).

Residues 12 to 32 (LLAAFALLLLWQVWLFAQVAW) form a helical membrane-spanning segment.

This sequence belongs to the glycosyltransferase 51 family.

It is found in the cell inner membrane. The catalysed reaction is [GlcNAc-(1-&gt;4)-Mur2Ac(oyl-L-Ala-gamma-D-Glu-L-Lys-D-Ala-D-Ala)](n)-di-trans,octa-cis-undecaprenyl diphosphate + beta-D-GlcNAc-(1-&gt;4)-Mur2Ac(oyl-L-Ala-gamma-D-Glu-L-Lys-D-Ala-D-Ala)-di-trans,octa-cis-undecaprenyl diphosphate = [GlcNAc-(1-&gt;4)-Mur2Ac(oyl-L-Ala-gamma-D-Glu-L-Lys-D-Ala-D-Ala)](n+1)-di-trans,octa-cis-undecaprenyl diphosphate + di-trans,octa-cis-undecaprenyl diphosphate + H(+). Its pathway is cell wall biogenesis; peptidoglycan biosynthesis. In terms of biological role, peptidoglycan polymerase that catalyzes glycan chain elongation from lipid-linked precursors. The polypeptide is Biosynthetic peptidoglycan transglycosylase (Azoarcus sp. (strain BH72)).